Reading from the N-terminus, the 313-residue chain is Porphobilinogen deaminase (313 aa).

S-(dipyrrolylmethanemethyl)cysteine is present on Cys242.

Belongs to the HMBS family. As to quaternary structure, monomer. Dipyrromethane is required as a cofactor.

It carries out the reaction 4 porphobilinogen + H2O = hydroxymethylbilane + 4 NH4(+). The protein operates within porphyrin-containing compound metabolism; protoporphyrin-IX biosynthesis; coproporphyrinogen-III from 5-aminolevulinate: step 2/4. In terms of biological role, tetrapolymerization of the monopyrrole PBG into the hydroxymethylbilane pre-uroporphyrinogen in several discrete steps. This is Porphobilinogen deaminase from Marinobacter nauticus (strain ATCC 700491 / DSM 11845 / VT8) (Marinobacter aquaeolei).